A 590-amino-acid chain; its full sequence is Potassium-transporting ATPase potassium-binding subunit (590 aa).

The next 10 membrane-spanning stretches (helical) occupy residues 11–31 (IFIA…AAVF), 64–84 (TAYC…TYLI), 136–156 (GLAT…IAFI), 178–198 (ILWV…SQGV), 273–293 (MLEM…LGQM), 301–321 (WAVL…CYWA), 403–423 (AGLY…GLMV), 442–462 (AMLY…VAVL), 511–531 (LGFA…ALAG), and 552–572 (LFTV…FLPA).

It belongs to the KdpA family. As to quaternary structure, the system is composed of three essential subunits: KdpA, KdpB and KdpC.

The protein resides in the cell inner membrane. In terms of biological role, part of the high-affinity ATP-driven potassium transport (or Kdp) system, which catalyzes the hydrolysis of ATP coupled with the electrogenic transport of potassium into the cytoplasm. This subunit binds the periplasmic potassium ions and delivers the ions to the membrane domain of KdpB through an intramembrane tunnel. In Acidobacterium capsulatum (strain ATCC 51196 / DSM 11244 / BCRC 80197 / JCM 7670 / NBRC 15755 / NCIMB 13165 / 161), this protein is Potassium-transporting ATPase potassium-binding subunit.